The following is a 538-amino-acid chain: uncharacterized protein (538 aa).

4 disordered regions span residues 20 to 71, 151 to 211, 288 to 331, and 458 to 482; these read RLSA…GGAQ, LWAE…EHPK, MLQP…QQHK, and EFEK…LKNY. Residues 154–171 are compositionally biased toward basic and acidic residues; it reads ESEKSESKGTRRDFRSYD.

This is an uncharacterized protein from Homo sapiens (Human).